A 449-amino-acid polypeptide reads, in one-letter code: Ribulose bisphosphate carboxylase large chain (449 aa).

Residue Lys-7 is modified to N6,N6,N6-trimethyllysine. Substrate-binding residues include Asn-116 and Thr-166. Residue Lys-168 is the Proton acceptor of the active site. Lys-170 provides a ligand contact to substrate. Mg(2+) is bound by residues Lys-194, Asp-196, and Glu-197. Lys-194 is modified (N6-carboxylysine). The Proton acceptor role is filled by His-287. Substrate contacts are provided by Arg-288, His-320, and Ser-372.

Belongs to the RuBisCO large chain family. Type I subfamily. In terms of assembly, heterohexadecamer of 8 large chains and 8 small chains; disulfide-linked. The disulfide link is formed within the large subunit homodimers. Requires Mg(2+) as cofactor. In terms of processing, the disulfide bond which can form in the large chain dimeric partners within the hexadecamer appears to be associated with oxidative stress and protein turnover.

Its subcellular location is the plastid. It is found in the chloroplast. The enzyme catalyses 2 (2R)-3-phosphoglycerate + 2 H(+) = D-ribulose 1,5-bisphosphate + CO2 + H2O. It catalyses the reaction D-ribulose 1,5-bisphosphate + O2 = 2-phosphoglycolate + (2R)-3-phosphoglycerate + 2 H(+). In terms of biological role, ruBisCO catalyzes two reactions: the carboxylation of D-ribulose 1,5-bisphosphate, the primary event in carbon dioxide fixation, as well as the oxidative fragmentation of the pentose substrate in the photorespiration process. Both reactions occur simultaneously and in competition at the same active site. The protein is Ribulose bisphosphate carboxylase large chain of Liriope muscari (Big blue lilyturf).